Here is a 100-residue protein sequence, read N- to C-terminus: UPF0473 protein Csac_1599 (100 aa).

The protein belongs to the UPF0473 family.

The protein is UPF0473 protein Csac_1599 of Caldicellulosiruptor saccharolyticus (strain ATCC 43494 / DSM 8903 / Tp8T 6331).